The chain runs to 605 residues: DNA primase (605 aa).

The CHC2-type zinc-finger motif lies at Cys-38 to Cys-62. In terms of domain architecture, Toprim spans Asp-260 to Gly-341. Mg(2+)-binding residues include Glu-266, Asp-310, and Asp-312.

This sequence belongs to the DnaG primase family. In terms of assembly, monomer. Interacts with DnaB. Requires Zn(2+) as cofactor. Mg(2+) is required as a cofactor.

The catalysed reaction is ssDNA + n NTP = ssDNA/pppN(pN)n-1 hybrid + (n-1) diphosphate.. Its function is as follows. RNA polymerase that catalyzes the synthesis of short RNA molecules used as primers for DNA polymerase during DNA replication. The protein is DNA primase of Staphylococcus aureus (strain Mu50 / ATCC 700699).